Consider the following 160-residue polypeptide: Salivary gland broad-spectrum antiviral protein (160 aa).

The helical transmembrane segment at 17–37 threads the bilayer; sequence VALGLYFTVVVFVLFITSVNL. N-linked (GlcNAc...) asparagine glycosylation is found at N62 and N145.

In terms of tissue distribution, salivary gland (at protein level).

The protein localises to the membrane. Functionally, (Microbial infection) Modulates replication of Zika virus in salivary glands. (Microbial infection) Modulates replication of dengue virus type 2 in salivary glands. Its function is as follows. (Microbial infection) Modulates replication of chikungunya virus in salivary glands. This is Salivary gland broad-spectrum antiviral protein from Aedes aegypti (Yellowfever mosquito).